A 37-amino-acid chain; its full sequence is U4-theraphotoxin-Hhn1v (37 aa).

3 disulfides stabilise this stretch: cysteine 3–cysteine 17, cysteine 7–cysteine 28, and cysteine 22–cysteine 33.

The protein belongs to the neurotoxin 12 (Hwtx-2) family. 02 (Hwtx-2) subfamily. As to expression, expressed by the venom gland.

Its subcellular location is the secreted. In terms of biological role, postsynaptic neurotoxin. In Cyriopagopus hainanus (Chinese bird spider), this protein is U4-theraphotoxin-Hhn1v.